We begin with the raw amino-acid sequence, 670 residues long: DNA ligase (670 aa).

NAD(+) is bound by residues 33 to 37, 82 to 83, and E114; these read DAEYD and SL. Residue K116 is the N6-AMP-lysine intermediate of the active site. Residues R137, E173, K291, and K315 each coordinate NAD(+). Zn(2+) is bound by residues C409, C412, C427, and C433. Positions 592 to 670 constitute a BRCT domain; sequence VQSDRLSGNT…ENALAELLSD (79 aa).

The protein belongs to the NAD-dependent DNA ligase family. LigA subfamily. The cofactor is Mg(2+). Mn(2+) is required as a cofactor.

It carries out the reaction NAD(+) + (deoxyribonucleotide)n-3'-hydroxyl + 5'-phospho-(deoxyribonucleotide)m = (deoxyribonucleotide)n+m + AMP + beta-nicotinamide D-nucleotide.. DNA ligase that catalyzes the formation of phosphodiester linkages between 5'-phosphoryl and 3'-hydroxyl groups in double-stranded DNA using NAD as a coenzyme and as the energy source for the reaction. It is essential for DNA replication and repair of damaged DNA. The polypeptide is DNA ligase (Idiomarina loihiensis (strain ATCC BAA-735 / DSM 15497 / L2-TR)).